Here is a 288-residue protein sequence, read N- to C-terminus: Fructokinase (288 aa).

Residue Thr131 participates in ATP binding. 4 residues coordinate Zn(2+): His154, Cys169, His172, and Cys175. ATP-binding positions include Pro183 and 231-235; that span reads GVMNQ.

Belongs to the ROK (NagC/XylR) family. It depends on Mg(2+) as a cofactor.

It catalyses the reaction D-fructose + ATP = D-fructose 6-phosphate + ADP + H(+). Inhibition by zinc ions. This is Fructokinase (scrK) from Pediococcus pentosaceus.